We begin with the raw amino-acid sequence, 147 residues long: uncharacterized protein (147 aa).

The segment at 51–72 (VTSSMSVMNDSEECPLINGPSM) is disordered.

This is an uncharacterized protein from Gallid herpesvirus 2 (strain GA) (GaHV-2).